The sequence spans 233 residues: Ribosome maturation factor RimP (233 aa).

The segment covering 167–179 (RGKAAEREKKRDL) has biased composition (basic and acidic residues). The disordered stretch occupies residues 167 to 233 (RGKAAEREKK…RARRGEIDPD (67 aa)). Over residues 187–196 (PHAKPAAQAK) the composition is skewed to low complexity. The segment covering 220–233 (LAADRARRGEIDPD) has biased composition (basic and acidic residues).

The protein belongs to the RimP family.

It is found in the cytoplasm. Its function is as follows. Required for maturation of 30S ribosomal subunits. This is Ribosome maturation factor RimP from Bradyrhizobium sp. (strain ORS 278).